A 221-amino-acid polypeptide reads, in one-letter code: Pyridoxal phosphate homeostasis protein (221 aa).

Lys-26 bears the N6-(pyridoxal phosphate)lysine mark.

This sequence belongs to the pyridoxal phosphate-binding protein YggS/PROSC family.

In terms of biological role, pyridoxal 5'-phosphate (PLP)-binding protein, which is involved in PLP homeostasis. The protein is Pyridoxal phosphate homeostasis protein of Corynebacterium glutamicum (strain ATCC 13032 / DSM 20300 / JCM 1318 / BCRC 11384 / CCUG 27702 / LMG 3730 / NBRC 12168 / NCIMB 10025 / NRRL B-2784 / 534).